We begin with the raw amino-acid sequence, 135 residues long: Large ribosomal subunit protein uL16c (135 aa).

A compositionally biased stretch (basic residues) spans 1–17 (MLSPKRTRFRKQHRGRM). The tract at residues 1-20 (MLSPKRTRFRKQHRGRMKGT) is disordered.

This sequence belongs to the universal ribosomal protein uL16 family. In terms of assembly, part of the 50S ribosomal subunit.

The protein resides in the plastid. The protein localises to the chloroplast. The protein is Large ribosomal subunit protein uL16c of Lemna minor (Common duckweed).